The sequence spans 364 residues: Aminomethyltransferase (364 aa).

Belongs to the GcvT family. In terms of assembly, the glycine cleavage system is composed of four proteins: P, T, L and H.

It carries out the reaction N(6)-[(R)-S(8)-aminomethyldihydrolipoyl]-L-lysyl-[protein] + (6S)-5,6,7,8-tetrahydrofolate = N(6)-[(R)-dihydrolipoyl]-L-lysyl-[protein] + (6R)-5,10-methylene-5,6,7,8-tetrahydrofolate + NH4(+). In terms of biological role, the glycine cleavage system catalyzes the degradation of glycine. The sequence is that of Aminomethyltransferase from Escherichia coli O81 (strain ED1a).